The sequence spans 3661 residues: Serine/threonine-protein kinase SMG1 (3661 aa).

Residues 1–11 (MSRRAPGSRLS) are compositionally biased toward low complexity. Disordered stretches follow at residues 1–101 (MSRR…TYGR) and 116–144 (PEFTSVQHGSRALATKDMRKSQERSMSYS). The interval 1–1977 (MSRRAPGSRL…GVLLQQHMYV (1977 aa)) is interaction with SMG8 and SMG9. A compositionally biased stretch (polar residues) spans 26–35 (NDWQPRTDSA). 2 stretches are compositionally biased toward basic and acidic residues: residues 69–86 (QRHDDTRVHADIQNDEKG) and 129–138 (ATKDMRKSQE). The residue at position 173 (K173) is an N6-acetyllysine. Over residues 1154–1165 (RNSASPKHSLNG) the composition is skewed to polar residues. The interval 1154 to 1175 (RNSASPKHSLNGESRKTVLSKP) is disordered. One can recognise an FAT domain in the interval 1283–1866 (RELQKSIEVQ…LYPAIVGTIS (584 aa)). One copy of the HEAT repeat lies at 1817–1852 (APWRGIIPQLFSRLNHPEVYVRQSICNLLCRVAQDS). The tract at residues 1898-1919 (ECEGGSPPASQDSNKDEPKSGL) is disordered. Residues 2124–2463 (VGGTITILPT…MEREITRSLF (340 aa)) enclose the PI3K/PI4K catalytic domain. Residues 2130-2136 (ILPTKTK) are G-loop. The segment at 2332–2340 (GLGDRHLDN) is catalytic loop. Positions 2352–2376 (HIDYNVCFEKGKSLRVPEKVPFRMT) are activation loop. T3550 carries the phosphothreonine modification. Residues S3556 and S3570 each carry the phosphoserine modification. A compositionally biased stretch (polar residues) spans 3568–3579 (ATSADTPPSTVP). The segment at 3568–3591 (ATSADTPPSTVPGTGKSVACSPKK) is disordered. T3573 and T3577 each carry phosphothreonine. Positions 3629–3661 (RRMSVAEQVDYVIKEATNLDNLAQLYEGWTAWV) constitute an FATC domain.

It belongs to the PI3/PI4-kinase family. In terms of assembly, component of the SMG1C complex composed of SMG1, SMG8 and SMG9; the recruitment of SMG8 to SMG1 N-terminus induces a large conformational change in the SMG1 C-terminal head domain containing the catalytic domain. Component of the transient SURF (SMG1-UPF1-eRF1-eRF3) complex. Part of a complex composed of SMG1, DHX34 and UPF1; within the complex DHX34 acts as a scaffolding protein to facilitate SMG1 phosphorylation of UPF1. Interacts with PRKCI. Interacts with TELO2 and TTI1. Interacts with RUVBL1 and RUVBL2. Interacts with UPF2. Interacts with DHX34 (via C-terminus); the interaction is RNA-independent. Mn(2+) is required as a cofactor. In terms of processing, autophosphorylated. In terms of tissue distribution, widely expressed, with highest level in heart and skeletal muscle. Expressed in placenta, brain, lung and spleen, but not in liver.

It localises to the nucleus. The protein resides in the cytoplasm. The catalysed reaction is L-seryl-[protein] + ATP = O-phospho-L-seryl-[protein] + ADP + H(+). It catalyses the reaction L-threonyl-[protein] + ATP = O-phospho-L-threonyl-[protein] + ADP + H(+). Inhibited by caffeine, LY294002 and wortmannin. In terms of biological role, serine/threonine protein kinase involved in both mRNA surveillance and genotoxic stress response pathways. Recognizes the substrate consensus sequence [ST]-Q. Plays a central role in nonsense-mediated decay (NMD) of mRNAs containing premature stop codons by phosphorylating UPF1/RENT1. Recruited by release factors to stalled ribosomes together with SMG8 and SMG9 (forming the SMG1C protein kinase complex), and UPF1 to form the transient SURF (SMG1-UPF1-eRF1-eRF3) complex. In EJC-dependent NMD, the SURF complex associates with the exon junction complex (EJC) through UPF2 and allows the formation of an UPF1-UPF2-UPF3 surveillance complex which is believed to activate NMD. Also acts as a genotoxic stress-activated protein kinase that displays some functional overlap with ATM. Can phosphorylate p53/TP53 and is required for optimal p53/TP53 activation after cellular exposure to genotoxic stress. Its depletion leads to spontaneous DNA damage and increased sensitivity to ionizing radiation (IR). May activate PRKCI but not PRKCZ. This Homo sapiens (Human) protein is Serine/threonine-protein kinase SMG1.